Reading from the N-terminus, the 469-residue chain is MSAPRTLYDKIWDDHLVDEQADGTCLLYIDRHLVHEVTSPQAFEGLRMSGRKVRAPEKTLAVVDHNVPTSPDRHLGIKNEESRIQVEQLAKNAAEFNVEYYSENDKRQGIVHIIGPEQGFTLPGMTIVCGDSHTSTHGAFGSLAHGIGTSEVEHVLATQTLIQKKAKNMLVQVDGQLPAGVTAKDIVLAIIGEIGTAGGTGYVIEYAGEAIRSLSMEGRMTICNMSIEGGARAGLIAPDEITFEYIKGKPRAPKGEALEQAIAYWKTLKSDEGAHFDRVVKLNAAELPPIVSWGSSPEDVVSVQGIVPNPDEIQDETKRASKWRALEYMGLKPGTPMTDINIDRVFIGSCTNGRIEDLRAVANVVEGKTVASTVNAMIVPGSGLVKEQAEAEGLDKIFKAAGFDWREPGCSMCLAMNDDRLKPGERCASTSNRNFEGRQGFKGRTHLVSPAMAAAAAIAGHFVDIREWN.

[4Fe-4S] cluster-binding residues include C350, C410, and C413.

Belongs to the aconitase/IPM isomerase family. LeuC type 1 subfamily. As to quaternary structure, heterodimer of LeuC and LeuD. Requires [4Fe-4S] cluster as cofactor.

It carries out the reaction (2R,3S)-3-isopropylmalate = (2S)-2-isopropylmalate. Its pathway is amino-acid biosynthesis; L-leucine biosynthesis; L-leucine from 3-methyl-2-oxobutanoate: step 2/4. Its function is as follows. Catalyzes the isomerization between 2-isopropylmalate and 3-isopropylmalate, via the formation of 2-isopropylmaleate. The polypeptide is 3-isopropylmalate dehydratase large subunit (Rhizobium etli (strain CIAT 652)).